We begin with the raw amino-acid sequence, 84 residues long: MESVITATIIGASILLAFAALGTAIGFAILGGKFLESSARQPELASSLQTKMFIVAGLLDAIAMIAVGISLLFIFANPFIDLLK.

Transmembrane regions (helical) follow at residues isoleucine 9–isoleucine 29 and isoleucine 54–isoleucine 74.

This sequence belongs to the ATPase C chain family. In terms of assembly, F-type ATPases have 2 components, F(1) - the catalytic core - and F(0) - the membrane proton channel. F(1) has five subunits: alpha(3), beta(3), gamma(1), delta(1), epsilon(1). F(0) has three main subunits: a(1), b(2) and c(10-14). The alpha and beta chains form an alternating ring which encloses part of the gamma chain. F(1) is attached to F(0) by a central stalk formed by the gamma and epsilon chains, while a peripheral stalk is formed by the delta and b chains.

The protein resides in the cell inner membrane. Functionally, f(1)F(0) ATP synthase produces ATP from ADP in the presence of a proton or sodium gradient. F-type ATPases consist of two structural domains, F(1) containing the extramembraneous catalytic core and F(0) containing the membrane proton channel, linked together by a central stalk and a peripheral stalk. During catalysis, ATP synthesis in the catalytic domain of F(1) is coupled via a rotary mechanism of the central stalk subunits to proton translocation. Its function is as follows. Key component of the F(0) channel; it plays a direct role in translocation across the membrane. A homomeric c-ring of between 10-14 subunits forms the central stalk rotor element with the F(1) delta and epsilon subunits. The polypeptide is ATP synthase subunit c (Actinobacillus pleuropneumoniae serotype 7 (strain AP76)).